The following is a 404-amino-acid chain: Tryptophan synthase beta chain (404 aa).

K94 carries the post-translational modification N6-(pyridoxal phosphate)lysine.

Belongs to the TrpB family. In terms of assembly, tetramer of two alpha and two beta chains. The cofactor is pyridoxal 5'-phosphate.

The enzyme catalyses (1S,2R)-1-C-(indol-3-yl)glycerol 3-phosphate + L-serine = D-glyceraldehyde 3-phosphate + L-tryptophan + H2O. It functions in the pathway amino-acid biosynthesis; L-tryptophan biosynthesis; L-tryptophan from chorismate: step 5/5. Functionally, the beta subunit is responsible for the synthesis of L-tryptophan from indole and L-serine. The chain is Tryptophan synthase beta chain from Staphylococcus aureus (strain JH1).